Here is a 358-residue protein sequence, read N- to C-terminus: Peptide chain release factor 1 (358 aa).

Position 233 is an N5-methylglutamine (Gln-233).

The protein belongs to the prokaryotic/mitochondrial release factor family. Post-translationally, methylated by PrmC. Methylation increases the termination efficiency of RF1.

The protein resides in the cytoplasm. In terms of biological role, peptide chain release factor 1 directs the termination of translation in response to the peptide chain termination codons UAG and UAA. The protein is Peptide chain release factor 1 of Staphylococcus aureus (strain MRSA252).